We begin with the raw amino-acid sequence, 353 residues long: S-adenosylmethionine:tRNA ribosyltransferase-isomerase (353 aa).

The protein belongs to the QueA family. Monomer.

The protein resides in the cytoplasm. The catalysed reaction is 7-aminomethyl-7-carbaguanosine(34) in tRNA + S-adenosyl-L-methionine = epoxyqueuosine(34) in tRNA + adenine + L-methionine + 2 H(+). Its pathway is tRNA modification; tRNA-queuosine biosynthesis. Functionally, transfers and isomerizes the ribose moiety from AdoMet to the 7-aminomethyl group of 7-deazaguanine (preQ1-tRNA) to give epoxyqueuosine (oQ-tRNA). The protein is S-adenosylmethionine:tRNA ribosyltransferase-isomerase of Cupriavidus metallidurans (strain ATCC 43123 / DSM 2839 / NBRC 102507 / CH34) (Ralstonia metallidurans).